The primary structure comprises 212 residues: ATP-dependent dethiobiotin synthetase BioD (212 aa).

Residue 13–18 (GIGKTV) coordinates ATP. Threonine 17 provides a ligand contact to Mg(2+). The active site involves lysine 33. Serine 37 provides a ligand contact to substrate. Glutamate 100 lines the Mg(2+) pocket. Residues 100–103 (EGAG) and 184–186 (PRL) each bind ATP.

It belongs to the dethiobiotin synthetase family. Homodimer. It depends on Mg(2+) as a cofactor.

The protein resides in the cytoplasm. It catalyses the reaction (7R,8S)-7,8-diammoniononanoate + CO2 + ATP = (4R,5S)-dethiobiotin + ADP + phosphate + 3 H(+). It functions in the pathway cofactor biosynthesis; biotin biosynthesis; biotin from 7,8-diaminononanoate: step 1/2. In terms of biological role, catalyzes a mechanistically unusual reaction, the ATP-dependent insertion of CO2 between the N7 and N8 nitrogen atoms of 7,8-diaminopelargonic acid (DAPA, also called 7,8-diammoniononanoate) to form a ureido ring. The chain is ATP-dependent dethiobiotin synthetase BioD from Rhodopseudomonas palustris (strain ATCC BAA-98 / CGA009).